A 274-amino-acid polypeptide reads, in one-letter code: Leucine-rich repeat-containing protein 10 (274 aa).

LRR repeat units lie at residues 30–51, 52–74, 76–97, 98–120, 121–143, 145–166, 167–189, and 191–213; these read LDRM…VCSF, TELV…LAQL, NLQI…VCTL, KQLC…LSLL, QNLR…VCEL, LLKT…LRRL, RELR…LLRM, and FLEV…HLTN. A disordered region spans residues 236–274; sequence RVGRWAEETPEPDPRKARRYALAKEENQEPPPPLLPSSS. Over residues 239–250 the composition is skewed to basic and acidic residues; sequence RWAEETPEPDPR. Residues 264–274 are compositionally biased toward pro residues; it reads EPPPPLLPSSS.

As to expression, detected specifically in the heart.

It is found in the nucleus. Its function is as follows. May play important roles in cardiac development and/or cardiac function. The sequence is that of Leucine-rich repeat-containing protein 10 (Lrrc10) from Mus musculus (Mouse).